Here is an 88-residue protein sequence, read N- to C-terminus: Large ribosomal subunit protein bL27 (88 aa).

The segment at 1 to 21 (MAHKKGASSSRNGRDSAAQRL) is disordered.

Belongs to the bacterial ribosomal protein bL27 family.

The chain is Large ribosomal subunit protein bL27 from Mycobacterium avium (strain 104).